A 376-amino-acid chain; its full sequence is 23S rRNA (uracil(747)-C(5))-methyltransferase RlmC (376 aa).

Positions 3, 11, 14, and 88 each coordinate [4Fe-4S] cluster. Positions 213, 242, 263, and 308 each coordinate S-adenosyl-L-methionine. Catalysis depends on cysteine 335, which acts as the Nucleophile.

The protein belongs to the class I-like SAM-binding methyltransferase superfamily. RNA M5U methyltransferase family. RlmC subfamily.

It catalyses the reaction uridine(747) in 23S rRNA + S-adenosyl-L-methionine = 5-methyluridine(747) in 23S rRNA + S-adenosyl-L-homocysteine + H(+). Functionally, catalyzes the formation of 5-methyl-uridine at position 747 (m5U747) in 23S rRNA. In Vibrio vulnificus (strain YJ016), this protein is 23S rRNA (uracil(747)-C(5))-methyltransferase RlmC.